A 270-amino-acid chain; its full sequence is Interleukin-1 beta (270 aa).

A propeptide spanning residues 1-118 is cleaved from the precursor; it reads MATVPEPTSE…VYDDDAFVCD (118 aa).

This sequence belongs to the IL-1 family. Monomer. In its precursor form, weakly interacts with full-length MEFV; the mature cytokine does not interact at all. Interacts with integrins ITGAV:ITGBV and ITGA5:ITGB1; integrin-binding is required for IL1B signaling. Interacts with cargo receptor TMED10; the interaction is direct and is required for the secretion of IL1B mature form. Interacts with HSP90AB1; the interaction facilitates cargo translocation into the ERGIC. Interacts with HSP90B1; the interaction facilitates cargo translocation into the ERGIC.

The protein resides in the cytoplasm. Its subcellular location is the cytosol. The protein localises to the secreted. It localises to the lysosome. It is found in the extracellular exosome. In terms of biological role, potent pro-inflammatory cytokine. Initially discovered as the major endogenous pyrogen, induces prostaglandin synthesis, neutrophil influx and activation, T-cell activation and cytokine production, B-cell activation and antibody production, and fibroblast proliferation and collagen production. Promotes Th17 differentiation of T-cells. Synergizes with IL12/interleukin-12 to induce IFNG synthesis from T-helper 1 (Th1) cells. Plays a role in angiogenesis by inducing VEGF production synergistically with TNF and IL6. Involved in transduction of inflammation downstream of pyroptosis: its mature form is specifically released in the extracellular milieu by passing through the gasdermin-D (GSDMD) pore. The polypeptide is Interleukin-1 beta (IL1B) (Phoca vitulina richardii (Pacific harbor seal)).